The chain runs to 116 residues: uncharacterized protein (116 aa).

This is an uncharacterized protein from Homo sapiens (Human).